Reading from the N-terminus, the 637-residue chain is 1-deoxy-D-xylulose-5-phosphate synthase (637 aa).

Residues histidine 76 and 117–119 (GHS) each bind thiamine diphosphate. Position 148 (aspartate 148) interacts with Mg(2+). Residues 149-150 (GA), asparagine 177, tyrosine 294, and glutamate 381 contribute to the thiamine diphosphate site. Position 177 (asparagine 177) interacts with Mg(2+).

This sequence belongs to the transketolase family. DXPS subfamily. As to quaternary structure, homodimer. Mg(2+) is required as a cofactor. Thiamine diphosphate serves as cofactor.

It carries out the reaction D-glyceraldehyde 3-phosphate + pyruvate + H(+) = 1-deoxy-D-xylulose 5-phosphate + CO2. It participates in metabolic intermediate biosynthesis; 1-deoxy-D-xylulose 5-phosphate biosynthesis; 1-deoxy-D-xylulose 5-phosphate from D-glyceraldehyde 3-phosphate and pyruvate: step 1/1. Catalyzes the acyloin condensation reaction between C atoms 2 and 3 of pyruvate and glyceraldehyde 3-phosphate to yield 1-deoxy-D-xylulose-5-phosphate (DXP). This chain is 1-deoxy-D-xylulose-5-phosphate synthase, found in Neisseria meningitidis serogroup A / serotype 4A (strain DSM 15465 / Z2491).